A 216-amino-acid chain; its full sequence is Pyrophosphatase PpaX (216 aa).

Catalysis depends on D9, which acts as the Nucleophile.

The protein belongs to the HAD-like hydrolase superfamily. PpaX family. Mg(2+) is required as a cofactor.

The enzyme catalyses diphosphate + H2O = 2 phosphate + H(+). Hydrolyzes pyrophosphate formed during P-Ser-HPr dephosphorylation by HPrK/P. Might play a role in controlling the intracellular pyrophosphate pool. The protein is Pyrophosphatase PpaX of Bacillus thuringiensis (strain Al Hakam).